The sequence spans 157 residues: Protein Smg homolog (157 aa).

It belongs to the Smg family.

This Photobacterium profundum (strain SS9) protein is Protein Smg homolog.